The chain runs to 633 residues: ABC transporter G family member 1 (633 aa).

The ABC transporter domain maps to 23–265 (LTWEDLWVTA…FALSGFPCPT (243 aa)). 60–67 (GPSGSGKS) contacts ATP. Residues 340-552 (TQSLVLTRRS…AYEGMFKNEF (213 aa)) form the ABC transmembrane type-2 domain. N-linked (GlcNAc...) asparagine glycosylation occurs at Asn-352. 6 helical membrane passes run 364–384 (LAVY…VGFS), 394–414 (MLMF…PSFV), 440–460 (LSAM…AYFM), 470–490 (FIYF…LMMI), 498–518 (FLMG…SGGF), and 580–600 (IDLV…LLVV).

Belongs to the ABC transporter superfamily. ABCG family. As to quaternary structure, homodimer. In terms of tissue distribution, restricted to the petals, with the highest expression in the limb and, to a lesser extent, in petal tubes, probably in both epidermal and mesophyll cell layers.

The protein resides in the cell membrane. Its function is as follows. ABC transporter controlling the release of volatile organic compounds (VOCs), including floral volatile benzenoids and phenylpropanoids (FVBP), in flowers of fragrant cultivars (e.g. cv. Mitchell and cv. V26). This scent, mostly produced in the evening and night by the petals, attracts the pollinators (e.g. the night-active hawkmoth pollinator Manduca sexta). This chain is ABC transporter G family member 1, found in Petunia hybrida (Petunia).